The following is a 374-amino-acid chain: uncharacterized protein (374 aa).

29–36 is an ATP binding site; the sequence is GSLNSGKS.

This sequence belongs to the archaeal ATPase family.

This is an uncharacterized protein from Methanocaldococcus jannaschii (strain ATCC 43067 / DSM 2661 / JAL-1 / JCM 10045 / NBRC 100440) (Methanococcus jannaschii).